The chain runs to 137 residues: MPTINQLVRKPRKSNATKSKSPALNFGYNSMKKKATNNVAPQKRGVATRVGTMTPKKPNSALRKYARVRLSNLYEVTAYIPGIGHNLQEHSVVLIRGGRVKDLPGVRYHIIRGALDTAGVDGRMTSRSKYGTKAPKK.

A disordered region spans residues 1–23 (MPTINQLVRKPRKSNATKSKSPA). Residue D102 is modified to 3-methylthioaspartic acid.

Belongs to the universal ribosomal protein uS12 family. Part of the 30S ribosomal subunit. Contacts proteins S8 and S17. May interact with IF1 in the 30S initiation complex.

Its function is as follows. With S4 and S5 plays an important role in translational accuracy. Functionally, interacts with and stabilizes bases of the 16S rRNA that are involved in tRNA selection in the A site and with the mRNA backbone. Located at the interface of the 30S and 50S subunits, it traverses the body of the 30S subunit contacting proteins on the other side and probably holding the rRNA structure together. The combined cluster of proteins S8, S12 and S17 appears to hold together the shoulder and platform of the 30S subunit. This Leuconostoc citreum (strain KM20) protein is Small ribosomal subunit protein uS12.